The sequence spans 364 residues: Chorismate synthase (364 aa).

The tract at residues Met-41–Arg-60 is disordered. The NADP(+) site is built by Arg-48 and Arg-54. FMN is bound by residues Arg-125–Ser-127, Asn-238–Ala-239, Gly-278, Lys-293–Ser-297, and Arg-319.

This sequence belongs to the chorismate synthase family. Homotetramer. It depends on FMNH2 as a cofactor.

The enzyme catalyses 5-O-(1-carboxyvinyl)-3-phosphoshikimate = chorismate + phosphate. The protein operates within metabolic intermediate biosynthesis; chorismate biosynthesis; chorismate from D-erythrose 4-phosphate and phosphoenolpyruvate: step 7/7. In terms of biological role, catalyzes the anti-1,4-elimination of the C-3 phosphate and the C-6 proR hydrogen from 5-enolpyruvylshikimate-3-phosphate (EPSP) to yield chorismate, which is the branch point compound that serves as the starting substrate for the three terminal pathways of aromatic amino acid biosynthesis. This reaction introduces a second double bond into the aromatic ring system. This is Chorismate synthase from Shewanella sp. (strain MR-4).